The primary structure comprises 400 residues: tRNA(Met) cytidine acetate ligase (400 aa).

ATP contacts are provided by residues 7–20, Gly-101, Asn-162, and Arg-187; that span reads IVEY…HQYH.

Belongs to the TmcAL family.

Its subcellular location is the cytoplasm. It catalyses the reaction cytidine(34) in elongator tRNA(Met) + acetate + ATP = N(4)-acetylcytidine(34) in elongator tRNA(Met) + AMP + diphosphate. Functionally, catalyzes the formation of N(4)-acetylcytidine (ac(4)C) at the wobble position of elongator tRNA(Met), using acetate and ATP as substrates. First activates an acetate ion to form acetyladenylate (Ac-AMP) and then transfers the acetyl group to tRNA to form ac(4)C34. This Oceanobacillus iheyensis (strain DSM 14371 / CIP 107618 / JCM 11309 / KCTC 3954 / HTE831) protein is tRNA(Met) cytidine acetate ligase.